The sequence spans 172 residues: Adenine phosphoribosyltransferase (172 aa).

Belongs to the purine/pyrimidine phosphoribosyltransferase family. As to quaternary structure, homodimer.

The protein resides in the cytoplasm. The catalysed reaction is AMP + diphosphate = 5-phospho-alpha-D-ribose 1-diphosphate + adenine. The protein operates within purine metabolism; AMP biosynthesis via salvage pathway; AMP from adenine: step 1/1. Catalyzes a salvage reaction resulting in the formation of AMP, that is energically less costly than de novo synthesis. In Clostridium botulinum (strain ATCC 19397 / Type A), this protein is Adenine phosphoribosyltransferase.